Consider the following 155-residue polypeptide: MSRRGTAEEKTAKSDPIYRNRLVNMLINRILKHGKKSLAYQILYRAMKKIQQKTETNPLSVLRQAIRRVTPDIAVKARRASGSTHPVPIEIGSTQGRALAIRWLLGASRKRPGRNMAFKLSSELVDATKGRGGAIRKREETHRMAEANRAFAHFR.

It belongs to the universal ribosomal protein uS7 family. Part of the 30S ribosomal subunit.

Its subcellular location is the plastid. It localises to the chloroplast. In terms of biological role, one of the primary rRNA binding proteins, it binds directly to 16S rRNA where it nucleates assembly of the head domain of the 30S subunit. This is Small ribosomal subunit protein uS7cz/uS7cy (rps7-A) from Oenothera argillicola (Appalachian evening primrose).